The primary structure comprises 362 residues: Outer membrane porin protein OmpD (362 aa).

The signal sequence occupies residues 1–21; sequence MKLKLVAVAVTSLLAAGVVNA.

It belongs to the Gram-negative porin family. Homotrimer.

It is found in the cell outer membrane. Its function is as follows. Forms pores that allow passive diffusion of small molecules across the outer membrane. This is Outer membrane porin protein OmpD (ompD) from Salmonella choleraesuis (strain SC-B67).